The primary structure comprises 420 residues: Argininosuccinate synthase (420 aa).

Residues 9-17 and Ala35 each bind ATP; that span reads AYSGGLDTS. Residues Tyr86 and Ser91 each coordinate L-citrulline. 114–122 contacts ATP; it reads SHGCTGKGN. L-aspartate contacts are provided by Thr118, Asn122, and Asp123. Asn122 is an L-citrulline binding site. Residues Arg126, Ser179, Ser188, Glu273, and Tyr285 each coordinate L-citrulline.

Belongs to the argininosuccinate synthase family. Type 1 subfamily. In terms of assembly, homotetramer.

It is found in the cytoplasm. It catalyses the reaction L-citrulline + L-aspartate + ATP = 2-(N(omega)-L-arginino)succinate + AMP + diphosphate + H(+). Its pathway is amino-acid biosynthesis; L-arginine biosynthesis; L-arginine from L-ornithine and carbamoyl phosphate: step 2/3. Catalyzes the eighth step in arginine biosynthesis. Also has a catabolic function as the first enzyme of citrulline utilization as nitrogen source via arginine and the reactions involved in the arginase pathway. This chain is Argininosuccinate synthase (ARG1), found in Saccharomyces cerevisiae (strain ATCC 204508 / S288c) (Baker's yeast).